Reading from the N-terminus, the 502-residue chain is Cobyric acid synthase (502 aa).

Residues 260–433 enclose the GATase cobBQ-type domain; sequence ILRVAVCAIP…WHGSLESDGF (174 aa). C341 acts as the Nucleophile in catalysis. H425 is a catalytic residue.

This sequence belongs to the CobB/CobQ family. CobQ subfamily.

The protein operates within cofactor biosynthesis; adenosylcobalamin biosynthesis. Its function is as follows. Catalyzes amidations at positions B, D, E, and G on adenosylcobyrinic A,C-diamide. NH(2) groups are provided by glutamine, and one molecule of ATP is hydrogenolyzed for each amidation. This chain is Cobyric acid synthase, found in Streptomyces avermitilis (strain ATCC 31267 / DSM 46492 / JCM 5070 / NBRC 14893 / NCIMB 12804 / NRRL 8165 / MA-4680).